The chain runs to 78 residues: LYR motif-containing protein 9 (78 aa).

The protein belongs to the complex I LYR family. LYRM9 subfamily.

This Danio rerio (Zebrafish) protein is LYR motif-containing protein 9 (lyrm9).